Here is a 228-residue protein sequence, read N- to C-terminus: Imidazole glycerol phosphate synthase subunit HisH (228 aa).

A Glutamine amidotransferase type-1 domain is found at 4-218; sequence DIAVVDYGMG…VTWNPGEHAS (215 aa). The active-site Nucleophile is Cys83. Active-site residues include His193 and Glu195.

Heterodimer of HisH and HisF.

Its subcellular location is the cytoplasm. It catalyses the reaction 5-[(5-phospho-1-deoxy-D-ribulos-1-ylimino)methylamino]-1-(5-phospho-beta-D-ribosyl)imidazole-4-carboxamide + L-glutamine = D-erythro-1-(imidazol-4-yl)glycerol 3-phosphate + 5-amino-1-(5-phospho-beta-D-ribosyl)imidazole-4-carboxamide + L-glutamate + H(+). It carries out the reaction L-glutamine + H2O = L-glutamate + NH4(+). Its pathway is amino-acid biosynthesis; L-histidine biosynthesis; L-histidine from 5-phospho-alpha-D-ribose 1-diphosphate: step 5/9. IGPS catalyzes the conversion of PRFAR and glutamine to IGP, AICAR and glutamate. The HisH subunit catalyzes the hydrolysis of glutamine to glutamate and ammonia as part of the synthesis of IGP and AICAR. The resulting ammonia molecule is channeled to the active site of HisF. In Thiobacillus denitrificans (strain ATCC 25259 / T1), this protein is Imidazole glycerol phosphate synthase subunit HisH.